The following is a 510-amino-acid chain: Chromosomal replication initiator protein DnaA (510 aa).

The segment at 1–87 is domain I, interacts with DnaA modulators; it reads MSVELWQQCV…IGSRRSSAPR (87 aa). The domain II stretch occupies residues 87–173; sequence RAAPNAPVSA…QVEGALKHTS (87 aa). The interval 140–160 is disordered; that stretch reads DSFDAMAEPASAPASSGRAEQ. Residues 144-157 show a composition bias toward low complexity; sequence AMAEPASAPASSGR. Positions 174-390 are domain III, AAA+ region; sequence YLNRTFTFDT…GALKRVIAHS (217 aa). Residues glycine 218, glycine 220, lysine 221, and threonine 222 each coordinate ATP. Residues 391 to 510 are domain IV, binds dsDNA; that stretch reads HFMGRDITIE…YKNLLRTLTT (120 aa).

It belongs to the DnaA family. Oligomerizes as a right-handed, spiral filament on DNA at oriC.

It localises to the cytoplasm. In terms of biological role, plays an essential role in the initiation and regulation of chromosomal replication. ATP-DnaA binds to the origin of replication (oriC) to initiate formation of the DNA replication initiation complex once per cell cycle. Binds the DnaA box (a 9 base pair repeat at the origin) and separates the double-stranded (ds)DNA. Forms a right-handed helical filament on oriC DNA; dsDNA binds to the exterior of the filament while single-stranded (ss)DNA is stabiized in the filament's interior. The ATP-DnaA-oriC complex binds and stabilizes one strand of the AT-rich DNA unwinding element (DUE), permitting loading of DNA polymerase. After initiation quickly degrades to an ADP-DnaA complex that is not apt for DNA replication. Binds acidic phospholipids. The chain is Chromosomal replication initiator protein DnaA from Pseudomonas putida (strain GB-1).